Here is a 239-residue protein sequence, read N- to C-terminus: Adapter protein MecA (239 aa).

The span at 118 to 128 (EQRTKEKEAQG) shows a compositional bias: basic and acidic residues. The interval 118–137 (EQRTKEKEAQGSKRQKSSAR) is disordered.

The protein belongs to the MecA family. Homodimer.

In terms of biological role, enables the recognition and targeting of unfolded and aggregated proteins to the ClpC protease or to other proteins involved in proteolysis. The sequence is that of Adapter protein MecA from Staphylococcus aureus (strain Mu3 / ATCC 700698).